The primary structure comprises 477 residues: Chaperonin GroEL 2 (477 aa).

Residues 29 to 32 (TLGP), 86 to 90 (DGTTT), and Gly-416 each bind ATP.

Belongs to the chaperonin (HSP60) family. In terms of assembly, forms a cylinder of 14 subunits composed of two heptameric rings stacked back-to-back. Interacts with the co-chaperonin GroES.

The protein localises to the cytoplasm. The catalysed reaction is ATP + H2O + a folded polypeptide = ADP + phosphate + an unfolded polypeptide.. Its function is as follows. Together with its co-chaperonin GroES, plays an essential role in assisting protein folding. The GroEL-GroES system forms a nano-cage that allows encapsulation of the non-native substrate proteins and provides a physical environment optimized to promote and accelerate protein folding. This chain is Chaperonin GroEL 2, found in Streptomyces lividans.